Here is a 196-residue protein sequence, read N- to C-terminus: Holliday junction branch migration complex subunit RuvA (196 aa).

The segment at 1-63 is domain I; it reads MLDFIKGEIV…EETHQLFGFI (63 aa). The segment at 64–142 is domain II; it reads DKKERQLFTH…PDNIPSSDTI (79 aa). Residues 143-146 form a flexible linker region; that stretch reads ITNI. The interval 146-196 is domain III; the sequence is ISSNITKEAITALITLGFSQSASQKVVNKIVSNNSSSTTIEQIIKKALKLL.

The protein belongs to the RuvA family. As to quaternary structure, homotetramer. Forms an RuvA(8)-RuvB(12)-Holliday junction (HJ) complex. HJ DNA is sandwiched between 2 RuvA tetramers; dsDNA enters through RuvA and exits via RuvB. An RuvB hexamer assembles on each DNA strand where it exits the tetramer. Each RuvB hexamer is contacted by two RuvA subunits (via domain III) on 2 adjacent RuvB subunits; this complex drives branch migration. In the full resolvosome a probable DNA-RuvA(4)-RuvB(12)-RuvC(2) complex forms which resolves the HJ.

The protein localises to the cytoplasm. The RuvA-RuvB-RuvC complex processes Holliday junction (HJ) DNA during genetic recombination and DNA repair, while the RuvA-RuvB complex plays an important role in the rescue of blocked DNA replication forks via replication fork reversal (RFR). RuvA specifically binds to HJ cruciform DNA, conferring on it an open structure. The RuvB hexamer acts as an ATP-dependent pump, pulling dsDNA into and through the RuvAB complex. HJ branch migration allows RuvC to scan DNA until it finds its consensus sequence, where it cleaves and resolves the cruciform DNA. The polypeptide is Holliday junction branch migration complex subunit RuvA (Azobacteroides pseudotrichonymphae genomovar. CFP2).